We begin with the raw amino-acid sequence, 792 residues long: Endonuclease MutS2 (792 aa).

334-341 (GPNTGGKT) serves as a coordination point for ATP. Residues 717–792 (IDLRGMMLSE…ENGVTVVELK (76 aa)) form the Smr domain.

Belongs to the DNA mismatch repair MutS family. MutS2 subfamily. As to quaternary structure, homodimer. Binds to stalled ribosomes, contacting rRNA.

Functionally, endonuclease that is involved in the suppression of homologous recombination and thus may have a key role in the control of bacterial genetic diversity. Acts as a ribosome collision sensor, splitting the ribosome into its 2 subunits. Detects stalled/collided 70S ribosomes which it binds and splits by an ATP-hydrolysis driven conformational change. Acts upstream of the ribosome quality control system (RQC), a ribosome-associated complex that mediates the extraction of incompletely synthesized nascent chains from stalled ribosomes and their subsequent degradation. Probably generates substrates for RQC. In Ruminiclostridium cellulolyticum (strain ATCC 35319 / DSM 5812 / JCM 6584 / H10) (Clostridium cellulolyticum), this protein is Endonuclease MutS2.